The sequence spans 195 residues: Probable prefoldin subunit 3 (195 aa).

The protein belongs to the prefoldin subunit alpha family. In terms of assembly, heterohexamer of two PFD-alpha type and four PFD-beta type subunits.

Its function is as follows. Binds specifically to cytosolic chaperonin (c-CPN) and transfers target proteins to it. Binds to nascent polypeptide chain and promotes folding in an environment in which there are many competing pathways for nonnative proteins. This chain is Probable prefoldin subunit 3 (pfdn3), found in Dictyostelium discoideum (Social amoeba).